A 276-amino-acid chain; its full sequence is Halorhodopsin (276 aa).

The propeptide occupies 1-21 (MTAVSTTATTVLQATQSDVLQ). Topologically, residues 22-25 (EIQS) are extracellular. The chain crosses the membrane as a helical span at residues 26–51 (NFLLNSSIWVNIALAGVVILLFVAMG). The Cytoplasmic portion of the chain corresponds to 52–57 (RDLESP). The chain crosses the membrane as a helical span at residues 58–81 (RAKLIWVATMLVPLVSISSYAGLA). At 82–105 (SGLTVGFLQMPPGHALAGQEVLSP) the chain is on the extracellular side. The helical transmembrane segment at 106-127 (WGRYLTWTFSTPMILLALGLLA) threads the bilayer. At 128-130 (DTD) the chain is on the cytoplasmic side. Residues 131-154 (IASLFTAITMDIGMCVTGLAAALI) traverse the membrane as a helical segment. Residues 155 to 157 (TSS) lie on the Extracellular side of the membrane. A helical membrane pass occupies residues 158–180 (HLLRWVFYGISCAFFVAVLYVLL). At 181–192 (VQWPADAEAAGT) the chain is on the cytoplasmic side. The chain crosses the membrane as a helical span at residues 193 to 216 (SEIFGTLKILTVVLWLGYPILWAL). The Extracellular segment spans residues 217–225 (GSEGVALLS). The helical transmembrane segment at 226–254 (VGVTSWGYSGLDILAKYVFAFLLLRWVAA) threads the bilayer. Residue K241 is modified to N6-(retinylidene)lysine. Over 255–276 (NEGTVSGSGMGIGSGGAAPADD) the chain is Cytoplasmic.

This sequence belongs to the archaeal/bacterial/fungal opsin family.

Its subcellular location is the cell membrane. In terms of biological role, light-driven anion pump. The protein is Halorhodopsin of Halobacterium halobium (strain shark).